The following is a 102-amino-acid chain: MSKQKIRIRLKAFDHTILDQSAEKIVETAKTSGAKVVGPVPLPTEKDVVTILRAVHKYKDSREQFEIRTHKRLIDIVNPSPKTVDALMRLNLPAGVDIEIKL.

This sequence belongs to the universal ribosomal protein uS10 family. As to quaternary structure, part of the 30S ribosomal subunit.

Involved in the binding of tRNA to the ribosomes. The sequence is that of Small ribosomal subunit protein uS10 from Clostridium beijerinckii (strain ATCC 51743 / NCIMB 8052) (Clostridium acetobutylicum).